A 404-amino-acid chain; its full sequence is Argininosuccinate synthase (404 aa).

ATP contacts are provided by residues 12 to 20 and A40; that span reads AYSGGLDTS. Residues Y92 and S97 each contribute to the L-citrulline site. G122 is an ATP binding site. 3 residues coordinate L-aspartate: T124, N128, and D129. N128 lines the L-citrulline pocket. The L-citrulline site is built by R132, S181, S190, E266, and Y278.

It belongs to the argininosuccinate synthase family. Type 1 subfamily. Homotetramer.

The protein localises to the cytoplasm. It catalyses the reaction L-citrulline + L-aspartate + ATP = 2-(N(omega)-L-arginino)succinate + AMP + diphosphate + H(+). It participates in amino-acid biosynthesis; L-arginine biosynthesis; L-arginine from L-ornithine and carbamoyl phosphate: step 2/3. The chain is Argininosuccinate synthase from Erwinia tasmaniensis (strain DSM 17950 / CFBP 7177 / CIP 109463 / NCPPB 4357 / Et1/99).